We begin with the raw amino-acid sequence, 237 residues long: Uridylate kinase (237 aa).

11–14 is an ATP binding site; sequence KLSG. G53 is a UMP binding site. 2 residues coordinate ATP: G54 and R58. UMP-binding positions include D73 and 134 to 141; that span reads TGNPFFTT. ATP is bound by residues T161, Y167, and D170.

It belongs to the UMP kinase family. In terms of assembly, homohexamer.

The protein resides in the cytoplasm. It carries out the reaction UMP + ATP = UDP + ADP. Its pathway is pyrimidine metabolism; CTP biosynthesis via de novo pathway; UDP from UMP (UMPK route): step 1/1. Its activity is regulated as follows. Inhibited by UTP. In terms of biological role, catalyzes the reversible phosphorylation of UMP to UDP. The chain is Uridylate kinase from Nitrosomonas eutropha (strain DSM 101675 / C91 / Nm57).